The chain runs to 424 residues: Light-independent protochlorophyllide reductase subunit N (424 aa).

Positions 27, 52, and 113 each coordinate [4Fe-4S] cluster.

This sequence belongs to the BchN/ChlN family. Protochlorophyllide reductase is composed of three subunits; BchL, BchN and BchB. Forms a heterotetramer of two BchB and two BchN subunits. The cofactor is [4Fe-4S] cluster.

It carries out the reaction chlorophyllide a + oxidized 2[4Fe-4S]-[ferredoxin] + 2 ADP + 2 phosphate = protochlorophyllide a + reduced 2[4Fe-4S]-[ferredoxin] + 2 ATP + 2 H2O. Its pathway is porphyrin-containing compound metabolism; bacteriochlorophyll biosynthesis (light-independent). Functionally, component of the dark-operative protochlorophyllide reductase (DPOR) that uses Mg-ATP and reduced ferredoxin to reduce ring D of protochlorophyllide (Pchlide) to form chlorophyllide a (Chlide). This reaction is light-independent. The NB-protein (BchN-BchB) is the catalytic component of the complex. This chain is Light-independent protochlorophyllide reductase subunit N, found in Halorhodospira halophila (strain DSM 244 / SL1) (Ectothiorhodospira halophila (strain DSM 244 / SL1)).